Reading from the N-terminus, the 629-residue chain is Rho GTPase-activating protein conundrum (629 aa).

The required for interaction with Moe stretch occupies residues 185 to 294 (PPKSGTYADI…CRDSSSLDSC (110 aa)). A disordered region spans residues 237–261 (SIGRSKESRSENDARSQKKKSSEVL). Basic and acidic residues predominate over residues 240–258 (RSKESRSENDARSQKKKSS). The region spanning 359 to 565 (VSINALIRRD…ILILRGEKLF (207 aa)) is the Rho-GAP domain.

As to quaternary structure, interacts with Moe (via FERM domain).

The protein localises to the cytoplasm. It is found in the cell membrane. The protein resides in the cell cortex. It localises to the cell junction. In terms of biological role, GTPase-activating protein (GAP) for Rho1; functions with the ERM protein Moe to regulate Rho1 and control proliferation in the developing epithelium. Recruited by Moe to the cell cortex where it negatively regulates Rho1 activity. Can also promote cell proliferation independently of its GAP activity, perhaps by acting with Arf6 to positively regulate Rac1. This is Rho GTPase-activating protein conundrum from Drosophila melanogaster (Fruit fly).